The following is a 394-amino-acid chain: Phosphoglycerate kinase (394 aa).

Residues 21-23, Arg-36, 59-62, Arg-118, and Arg-151 each bind substrate; these read DFN and HLGR. Ser-183 bears the Phosphoserine mark. Lys-201 is an ATP binding site. Thr-299 is subject to Phosphothreonine. ATP contacts are provided by residues Glu-323 and 350–353; that span reads GGDS.

Belongs to the phosphoglycerate kinase family. As to quaternary structure, monomer.

It is found in the cytoplasm. The catalysed reaction is (2R)-3-phosphoglycerate + ATP = (2R)-3-phospho-glyceroyl phosphate + ADP. The protein operates within carbohydrate degradation; glycolysis; pyruvate from D-glyceraldehyde 3-phosphate: step 2/5. This chain is Phosphoglycerate kinase (pgk), found in Bacillus subtilis (strain 168).